A 409-amino-acid polypeptide reads, in one-letter code: Evolutionarily conserved signaling intermediate in Toll pathway, mitochondrial (409 aa).

The N-terminal 26 residues, 1–26 (MLRRAQCLLRLHGNGGHSLVSRFRNY), are a transit peptide targeting the mitochondrion. 2 disordered regions span residues 27–53 (ATDEGNPKQNPNPNPRAQKPGTKNLPA) and 383–409 (EEIEGGASVPATSDNSSQDEHISSRQK). Positions 400 to 409 (QDEHISSRQK) are enriched in basic and acidic residues.

This sequence belongs to the ECSIT family. As to quaternary structure, interacts with Traf6. Associates with mitochondrial complex I assembly intermediates during its biogenesis.

The protein resides in the cytoplasm. It localises to the nucleus. It is found in the mitochondrion. Its function is as follows. As part of the MCIA complex, involved in the assembly of the mitochondrial complex I. Involved in the innate immune response; promotes the production of antibacterial peptides. The protein is Evolutionarily conserved signaling intermediate in Toll pathway, mitochondrial of Drosophila melanogaster (Fruit fly).